The sequence spans 72 residues: Translation initiation factor IF-1 (72 aa).

An S1-like domain is found at 1–72; sequence MAKEESIEIE…TKGRITYRYK (72 aa).

The protein belongs to the IF-1 family. In terms of assembly, component of the 30S ribosomal translation pre-initiation complex which assembles on the 30S ribosome in the order IF-2 and IF-3, IF-1 and N-formylmethionyl-tRNA(fMet); mRNA recruitment can occur at any time during PIC assembly.

It is found in the cytoplasm. Functionally, one of the essential components for the initiation of protein synthesis. Stabilizes the binding of IF-2 and IF-3 on the 30S subunit to which N-formylmethionyl-tRNA(fMet) subsequently binds. Helps modulate mRNA selection, yielding the 30S pre-initiation complex (PIC). Upon addition of the 50S ribosomal subunit IF-1, IF-2 and IF-3 are released leaving the mature 70S translation initiation complex. This is Translation initiation factor IF-1 from Chlorobium chlorochromatii (strain CaD3).